A 275-amino-acid chain; its full sequence is 2-C-methyl-D-erythritol 4-phosphate cytidylyltransferase (275 aa).

Belongs to the IspD/TarI cytidylyltransferase family. IspD subfamily.

It catalyses the reaction 2-C-methyl-D-erythritol 4-phosphate + CTP + H(+) = 4-CDP-2-C-methyl-D-erythritol + diphosphate. The protein operates within isoprenoid biosynthesis; isopentenyl diphosphate biosynthesis via DXP pathway; isopentenyl diphosphate from 1-deoxy-D-xylulose 5-phosphate: step 2/6. In terms of biological role, catalyzes the formation of 4-diphosphocytidyl-2-C-methyl-D-erythritol from CTP and 2-C-methyl-D-erythritol 4-phosphate (MEP). This Corynebacterium jeikeium (strain K411) protein is 2-C-methyl-D-erythritol 4-phosphate cytidylyltransferase.